The primary structure comprises 235 residues: Superoxide dismutase [Mn] 3.1, mitochondrial (235 aa).

Residues 1–31 (MALRTLASKKVLSFPFGGAGRPLAAAASARG) constitute a mitochondrion transit peptide. The Mn(2+) site is built by His-59, His-107, Asp-196, and His-200.

This sequence belongs to the iron/manganese superoxide dismutase family. In terms of assembly, homotetramer. The cofactor is Mn(2+).

It is found in the mitochondrion matrix. It carries out the reaction 2 superoxide + 2 H(+) = H2O2 + O2. Functionally, destroys superoxide anion radicals which are normally produced within the cells and which are toxic to biological systems. The protein is Superoxide dismutase [Mn] 3.1, mitochondrial (SODA.4) of Zea mays (Maize).